Reading from the N-terminus, the 255-residue chain is Pyrroloquinoline-quinone synthase (255 aa).

Belongs to the PqqC family.

It catalyses the reaction 6-(2-amino-2-carboxyethyl)-7,8-dioxo-1,2,3,4,7,8-hexahydroquinoline-2,4-dicarboxylate + 3 O2 = pyrroloquinoline quinone + 2 H2O2 + 2 H2O + H(+). It functions in the pathway cofactor biosynthesis; pyrroloquinoline quinone biosynthesis. Ring cyclization and eight-electron oxidation of 3a-(2-amino-2-carboxyethyl)-4,5-dioxo-4,5,6,7,8,9-hexahydroquinoline-7,9-dicarboxylic-acid to PQQ. The protein is Pyrroloquinoline-quinone synthase of Acinetobacter baylyi (strain ATCC 33305 / BD413 / ADP1).